The chain runs to 339 residues: Phosphate acyltransferase (339 aa).

This sequence belongs to the PlsX family. Homodimer. Probably interacts with PlsY.

The protein localises to the cytoplasm. It catalyses the reaction a fatty acyl-[ACP] + phosphate = an acyl phosphate + holo-[ACP]. It participates in lipid metabolism; phospholipid metabolism. In terms of biological role, catalyzes the reversible formation of acyl-phosphate (acyl-PO(4)) from acyl-[acyl-carrier-protein] (acyl-ACP). This enzyme utilizes acyl-ACP as fatty acyl donor, but not acyl-CoA. The polypeptide is Phosphate acyltransferase (Brachyspira hyodysenteriae (strain ATCC 49526 / WA1)).